The sequence spans 135 residues: Small ribosomal subunit protein uS9 (135 aa).

Belongs to the universal ribosomal protein uS9 family.

The chain is Small ribosomal subunit protein uS9 (rps9) from Archaeoglobus fulgidus (strain ATCC 49558 / DSM 4304 / JCM 9628 / NBRC 100126 / VC-16).